Consider the following 460-residue polypeptide: Probable argininosuccinate lyase (460 aa).

Positions 26, 114, and 159 each coordinate 2-(N(omega)-L-arginino)succinate. Histidine 160 (proton acceptor) is an active-site residue. Residue serine 281 is the Proton donor of the active site. 4 residues coordinate 2-(N(omega)-L-arginino)succinate: asparagine 289, tyrosine 321, glutamine 326, and lysine 329.

This sequence belongs to the lyase 1 family. Argininosuccinate lyase subfamily. In terms of assembly, homotetramer.

The enzyme catalyses 2-(N(omega)-L-arginino)succinate = fumarate + L-arginine. The protein operates within amino-acid biosynthesis; L-arginine biosynthesis; L-arginine from L-ornithine and carbamoyl phosphate: step 3/3. The protein is Probable argininosuccinate lyase (argx) of Schizosaccharomyces pombe (strain 972 / ATCC 24843) (Fission yeast).